A 297-amino-acid chain; its full sequence is Acetyl-coenzyme A carboxylase carboxyl transferase subunit beta (297 aa).

The 270-residue stretch at 27-296 (LWHKCPACEA…PEQAREAAAV (270 aa)) folds into the CoA carboxyltransferase N-terminal domain. Zn(2+) is bound by residues Cys-31, Cys-34, Cys-50, and Cys-53. Residues 31-53 (CPACEAVLYRPELEKTLDVCPKC) form a C4-type zinc finger.

The protein belongs to the AccD/PCCB family. As to quaternary structure, acetyl-CoA carboxylase is a heterohexamer composed of biotin carboxyl carrier protein (AccB), biotin carboxylase (AccC) and two subunits each of ACCase subunit alpha (AccA) and ACCase subunit beta (AccD). Zn(2+) is required as a cofactor.

It localises to the cytoplasm. The enzyme catalyses N(6)-carboxybiotinyl-L-lysyl-[protein] + acetyl-CoA = N(6)-biotinyl-L-lysyl-[protein] + malonyl-CoA. Its pathway is lipid metabolism; malonyl-CoA biosynthesis; malonyl-CoA from acetyl-CoA: step 1/1. In terms of biological role, component of the acetyl coenzyme A carboxylase (ACC) complex. Biotin carboxylase (BC) catalyzes the carboxylation of biotin on its carrier protein (BCCP) and then the CO(2) group is transferred by the transcarboxylase to acetyl-CoA to form malonyl-CoA. In Pseudomonas putida (strain W619), this protein is Acetyl-coenzyme A carboxylase carboxyl transferase subunit beta.